The primary structure comprises 481 residues: ATP synthase subunit beta (481 aa).

Residue 154-161 (GGAGVGKT) participates in ATP binding.

It belongs to the ATPase alpha/beta chains family. In terms of assembly, F-type ATPases have 2 components, CF(1) - the catalytic core - and CF(0) - the membrane proton channel. CF(1) has five subunits: alpha(3), beta(3), gamma(1), delta(1), epsilon(1). CF(0) has three main subunits: a(1), b(2) and c(9-12). The alpha and beta chains form an alternating ring which encloses part of the gamma chain. CF(1) is attached to CF(0) by a central stalk formed by the gamma and epsilon chains, while a peripheral stalk is formed by the delta and b chains.

It localises to the cell inner membrane. It carries out the reaction ATP + H2O + 4 H(+)(in) = ADP + phosphate + 5 H(+)(out). Its function is as follows. Produces ATP from ADP in the presence of a proton gradient across the membrane. The catalytic sites are hosted primarily by the beta subunits. In Novosphingobium aromaticivorans (strain ATCC 700278 / DSM 12444 / CCUG 56034 / CIP 105152 / NBRC 16084 / F199), this protein is ATP synthase subunit beta.